The primary structure comprises 266 residues: Bidirectional sugar transporter SWEET7b (266 aa).

The Extracellular segment spans residues 1–9; it reads MVSPDLIRN. The helical transmembrane segment at 10–30 threads the bilayer; the sequence is MVGIVGNIISFGLFLSPVPTF. The MtN3/slv 1 domain maps to 10–97; that stretch reads MVGIVGNIIS…TIFFLFSDKK (88 aa). Residues 31 to 45 lie on the Cytoplasmic side of the membrane; the sequence is YRIIKNKDVQDFKAD. A helical transmembrane segment spans residues 46-66; sequence PYLATLLNCMLWVFYGLPIVH. Topologically, residues 67–69 are extracellular; the sequence is PNS. A helical transmembrane segment spans residues 70–90; the sequence is ILVVTINGIGLIIEAVYLTIF. Residues 91-101 are Cytoplasmic-facing; it reads FLFSDKKNKKK. Residues 102 to 122 traverse the membrane as a helical segment; it reads MGVVLATEALFMAAVVLGVLL. The Extracellular segment spans residues 123–131; that stretch reads GAHTHQRRS. Residues 132 to 152 traverse the membrane as a helical segment; it reads LIVGILCAIFGTIMYSSPLTI. One can recognise a MtN3/slv 2 domain in the interval 133–216; it reads IVGILCAIFG…LILYAIYYRT (84 aa). The Cytoplasmic portion of the chain corresponds to 153–165; that stretch reads MSQVVKTKSVEYM. Residues 166–186 form a helical membrane-spanning segment; it reads PLLLSVVSFLNGLCWTSYALI. At 187–189 the chain is on the extracellular side; the sequence is RLD. Residues 190 to 210 form a helical membrane-spanning segment; the sequence is IFITIPNGLGVLFALMQLILY. Topologically, residues 211–266 are cytoplasmic; that stretch reads AIYYRTTPKKQDKNLELPTVAPVAKDTSIVTPVSKDDDVVDGGNASHVTINITIEP.

The protein belongs to the SWEET sugar transporter family. As to quaternary structure, forms homooligomers and/or heterooligomers.

The protein resides in the cell membrane. Mediates both low-affinity uptake and efflux of sugar across the plasma membrane. The chain is Bidirectional sugar transporter SWEET7b (SWEET7B) from Oryza sativa subsp. indica (Rice).